We begin with the raw amino-acid sequence, 266 residues long: ATP synthase subunit a (266 aa).

The next 7 membrane-spanning stretches (helical) occupy residues 28–48 (ISFT…AIFM), 90–110 (LIFT…VPLF), 125–145 (VTVT…VGFT), 158–178 (HGTP…SFIL), 187–207 (LFVA…FIVN), 216–236 (AFLA…MIGI), and 239–259 (LEFL…SLYL).

The protein belongs to the ATPase A chain family. F-type ATPases have 2 components, CF(1) - the catalytic core - and CF(0) - the membrane proton channel. CF(1) has five subunits: alpha(3), beta(3), gamma(1), delta(1), epsilon(1). CF(0) has three main subunits: a(1), b(2) and c(9-12). The alpha and beta chains form an alternating ring which encloses part of the gamma chain. CF(1) is attached to CF(0) by a central stalk formed by the gamma and epsilon chains, while a peripheral stalk is formed by the delta and b chains.

The protein resides in the cell inner membrane. Its function is as follows. Key component of the proton channel; it plays a direct role in the translocation of protons across the membrane. The sequence is that of ATP synthase subunit a from Zymomonas mobilis subsp. mobilis (strain ATCC 31821 / ZM4 / CP4).